The chain runs to 513 residues: ATP synthase subunit alpha (513 aa).

169–176 is a binding site for ATP; that stretch reads GDRQTGKT.

The protein belongs to the ATPase alpha/beta chains family. F-type ATPases have 2 components, CF(1) - the catalytic core - and CF(0) - the membrane proton channel. CF(1) has five subunits: alpha(3), beta(3), gamma(1), delta(1), epsilon(1). CF(0) has three main subunits: a(1), b(2) and c(9-12). The alpha and beta chains form an alternating ring which encloses part of the gamma chain. CF(1) is attached to CF(0) by a central stalk formed by the gamma and epsilon chains, while a peripheral stalk is formed by the delta and b chains.

It is found in the cell inner membrane. The enzyme catalyses ATP + H2O + 4 H(+)(in) = ADP + phosphate + 5 H(+)(out). Functionally, produces ATP from ADP in the presence of a proton gradient across the membrane. The alpha chain is a regulatory subunit. The chain is ATP synthase subunit alpha from Ralstonia nicotianae (strain ATCC BAA-1114 / GMI1000) (Ralstonia solanacearum).